The following is a 1059-amino-acid chain: Carbamoyl phosphate synthase large chain (1059 aa).

The tract at residues 1–401 is carboxyphosphate synthetic domain; that stretch reads MPKRQDISKI…AMLKAVRSLE (401 aa). Arg129, Arg169, Gly175, Gly176, Arg208, Ile210, Glu215, Gly241, Ile242, His243, Gln284, and Glu298 together coordinate ATP. The ATP-grasp 1 domain maps to 133-327; it reads KALMERLNEP…IAKMAAKIAV (195 aa). Residues Gln284, Glu298, and Asn300 each contribute to the Mg(2+) site. 3 residues coordinate Mn(2+): Gln284, Glu298, and Asn300. An oligomerization domain region spans residues 402 to 546; sequence IGAIGLDDIT…YATYEQENES (145 aa). The interval 547–929 is carbamoyl phosphate synthetic domain; that stretch reads IISTKKSVLV…ALYKAFIASN (383 aa). The ATP-grasp 2 domain maps to 671–861; the sequence is DQVIKELALP…LAQLATRVML (191 aa). Arg707, Ser746, Leu748, Glu752, Gly777, Val778, His779, Ser780, Gln820, and Glu832 together coordinate ATP. Positions 820, 832, and 834 each coordinate Mg(2+). Gln820, Glu832, and Asn834 together coordinate Mn(2+). One can recognise an MGS-like domain in the interval 930–1059; sequence IKVPRYGNVL…SRSFTVKEMH (130 aa). An allosteric domain region spans residues 930–1059; sequence IKVPRYGNVL…SRSFTVKEMH (130 aa).

Belongs to the CarB family. As to quaternary structure, composed of two chains; the small (or glutamine) chain promotes the hydrolysis of glutamine to ammonia, which is used by the large (or ammonia) chain to synthesize carbamoyl phosphate. Tetramer of heterodimers (alpha,beta)4. Requires Mg(2+) as cofactor. Mn(2+) serves as cofactor.

The enzyme catalyses hydrogencarbonate + L-glutamine + 2 ATP + H2O = carbamoyl phosphate + L-glutamate + 2 ADP + phosphate + 2 H(+). It catalyses the reaction hydrogencarbonate + NH4(+) + 2 ATP = carbamoyl phosphate + 2 ADP + phosphate + 2 H(+). Its pathway is amino-acid biosynthesis; L-arginine biosynthesis; carbamoyl phosphate from bicarbonate: step 1/1. The protein operates within pyrimidine metabolism; UMP biosynthesis via de novo pathway; (S)-dihydroorotate from bicarbonate: step 1/3. Functionally, large subunit of the glutamine-dependent carbamoyl phosphate synthetase (CPSase). CPSase catalyzes the formation of carbamoyl phosphate from the ammonia moiety of glutamine, carbonate, and phosphate donated by ATP, constituting the first step of 2 biosynthetic pathways, one leading to arginine and/or urea and the other to pyrimidine nucleotides. The large subunit (synthetase) binds the substrates ammonia (free or transferred from glutamine from the small subunit), hydrogencarbonate and ATP and carries out an ATP-coupled ligase reaction, activating hydrogencarbonate by forming carboxy phosphate which reacts with ammonia to form carbamoyl phosphate. The chain is Carbamoyl phosphate synthase large chain from Leuconostoc mesenteroides subsp. mesenteroides (strain ATCC 8293 / DSM 20343 / BCRC 11652 / CCM 1803 / JCM 6124 / NCDO 523 / NBRC 100496 / NCIMB 8023 / NCTC 12954 / NRRL B-1118 / 37Y).